The following is an 88-amino-acid chain: Phosphocarrier protein HPr (88 aa).

Positions 1–88 (MEKRDFHVVA…ETMKKEGLSE (88 aa)) constitute an HPr domain. His-15 acts as the Pros-phosphohistidine intermediate in catalysis. Position 46 is a phosphoserine; by HPrK/P (Ser-46).

The protein belongs to the HPr family.

The protein resides in the cytoplasm. Phosphorylation on Ser-46 inhibits the phosphoryl transfer from enzyme I to HPr. Functionally, general (non sugar-specific) component of the phosphoenolpyruvate-dependent sugar phosphotransferase system (sugar PTS). This major carbohydrate active-transport system catalyzes the phosphorylation of incoming sugar substrates concomitantly with their translocation across the cell membrane. The phosphoryl group from phosphoenolpyruvate (PEP) is transferred to the phosphoryl carrier protein HPr by enzyme I. Phospho-HPr then transfers it to the PTS EIIA domain. P-Ser-HPr interacts with the catabolite control protein A (CcpA), forming a complex that binds to DNA at the catabolite response elements cre, operator sites preceding a large number of catabolite-regulated genes. Thus, P-Ser-HPr is a corepressor in carbon catabolite repression (CCR), a mechanism that allows bacteria to coordinate and optimize the utilization of available carbon sources. P-Ser-HPr also plays a role in inducer exclusion, in which it probably interacts with several non-PTS permeases and inhibits their transport activity. The sequence is that of Phosphocarrier protein HPr (ptsH) from Latilactobacillus sakei (Lactobacillus sakei).